The chain runs to 514 residues: HERV-H LTR-associating protein 1 homolog (514 aa).

An N-terminal signal peptide occupies residues 1–29 (MQSFLLHCPPIRLCMGLACILFLWNAVSG). N-linked (GlcNAc...) asparagine glycans are attached at residues asparagine 58, asparagine 97, asparagine 139, asparagine 161, asparagine 179, asparagine 200, asparagine 217, asparagine 232, and asparagine 321. The disordered stretch occupies residues 379–420 (LHPTGILTTPSRLAQPSRASGTLMPGTQTTNPTQAPAPRVPQ). Positions 384–398 (ILTTPSRLAQPSRAS) are enriched in polar residues. The segment covering 403-415 (PGTQTTNPTQAPA) has biased composition (low complexity).

Its subcellular location is the secreted. The polypeptide is HERV-H LTR-associating protein 1 homolog (Hhla1) (Mus musculus (Mouse)).